Consider the following 265-residue polypeptide: Deoxyguanosine kinase, mitochondrial (265 aa).

32–40 (GNIAVGKST) is a binding site for ATP. Substrate is bound by residues glutamate 57, tyrosine 88, glutamine 99, and arginine 106. Glutamate 129 serves as the catalytic Proton acceptor. The substrate site is built by arginine 130 and aspartate 135. Residue 190–194 (RLQRR) participates in ATP binding. Glutamate 199 serves as a coordination point for substrate. An ATP-binding site is contributed by 242–244 (EDF).

The protein belongs to the DCK/DGK family. In terms of assembly, homodimer.

It is found in the mitochondrion. It catalyses the reaction 2'-deoxyguanosine + ATP = dGMP + ADP + H(+). Phosphorylates deoxyguanosine in the mitochondrial matrix with high efficiency but shows very low activity against other deoxynucleosides. The sequence is that of Deoxyguanosine kinase, mitochondrial from Xenopus laevis (African clawed frog).